The sequence spans 157 residues: 2-C-methyl-D-erythritol 2,4-cyclodiphosphate synthase (157 aa).

A divalent metal cation contacts are provided by D8 and H10. Residues 8–10 (DVH) and 34–35 (HS) each bind 4-CDP-2-C-methyl-D-erythritol 2-phosphate. H42 provides a ligand contact to a divalent metal cation. Residues 56–58 (DLG), 61–65 (FPDTD), 132–135 (TTTE), F139, and R142 each bind 4-CDP-2-C-methyl-D-erythritol 2-phosphate.

Belongs to the IspF family. Homotrimer. Requires a divalent metal cation as cofactor.

The enzyme catalyses 4-CDP-2-C-methyl-D-erythritol 2-phosphate = 2-C-methyl-D-erythritol 2,4-cyclic diphosphate + CMP. It functions in the pathway isoprenoid biosynthesis; isopentenyl diphosphate biosynthesis via DXP pathway; isopentenyl diphosphate from 1-deoxy-D-xylulose 5-phosphate: step 4/6. Its function is as follows. Involved in the biosynthesis of isopentenyl diphosphate (IPP) and dimethylallyl diphosphate (DMAPP), two major building blocks of isoprenoid compounds. Catalyzes the conversion of 4-diphosphocytidyl-2-C-methyl-D-erythritol 2-phosphate (CDP-ME2P) to 2-C-methyl-D-erythritol 2,4-cyclodiphosphate (ME-CPP) with a corresponding release of cytidine 5-monophosphate (CMP). The protein is 2-C-methyl-D-erythritol 2,4-cyclodiphosphate synthase of Salinibacter ruber (strain DSM 13855 / M31).